The following is a 364-amino-acid chain: Envelope glycoprotein US27 (364 aa).

The Virion surface segment spans residues 1-36; sequence MTTSTTTTTNIMLQVSNVTNHTLNSTEIYQLFEYTR. N-linked (GlcNAc...) asparagine; by host glycans are attached at residues N17, N20, and N24. The helical transmembrane segment at 37–57 threads the bilayer; the sequence is FGVWLMCIVGTFLNMLVITTI. The Intravirion portion of the chain corresponds to 58 to 69; it reads LYYRRKKKSPSD. Residues 70–90 form a helical membrane-spanning segment; that stretch reads TYICNLAVADLLIVVGLPFFL. Residues 91-103 are Virion surface-facing; it reads EYAKHHPKLSREV. The chain crosses the membrane as a helical span at residues 104 to 124; the sequence is VCSGLNACFYICLFAGVCFLI. Residues 125 to 150 are Intravirion-facing; it reads NLSMDRYCVIVWGVELNRVRNNKRAT. A helical transmembrane segment spans residues 151–171; sequence CWVVIFWILAALMGMPHYLMY. Residues 172 to 188 are Virion surface-facing; that stretch reads SHTNNECVGEFANETSG. A helical transmembrane segment spans residues 189-209; it reads WFPVFLNTKVNICGYLAPIVL. Over 210–234 the chain is Intravirion; sequence MAYTYNRMVRFIINYVGKWHMQTLH. A helical transmembrane segment spans residues 235-255; the sequence is VLLVVVVSFASFWFPFNLALF. The Virion surface portion of the chain corresponds to 256 to 279; the sequence is LESIRLLSGTQNETLQTVITFCLY. The helical transmembrane segment at 280 to 300 threads the bilayer; that stretch reads VGQFLAYVRACLNPGIYILVG. Over 301-364 the chain is Intravirion; it reads TQMRKDMWTT…MESGEEEFLL (64 aa). Residues 344–364 form a disordered region; it reads KRTHYDRKHAPMESGEEEFLL.

Belongs to the G-protein coupled receptor 1 family. In terms of assembly, heterodimerizes with US28.

It localises to the virion. The protein resides in the host cell membrane. In terms of biological role, plays an important role in spread of HCMV via the extracellular route. As a G-protein-coupled receptor (vGPCR), may activate signaling pathways important for virion assembly or egress processes. The sequence is that of Envelope glycoprotein US27 (US27) from Homo sapiens (Human).